Reading from the N-terminus, the 301-residue chain is Homoserine kinase (301 aa).

An ATP-binding site is contributed by 86-96 (PLARGLGSSAT).

It belongs to the GHMP kinase family. Homoserine kinase subfamily.

The protein resides in the cytoplasm. It catalyses the reaction L-homoserine + ATP = O-phospho-L-homoserine + ADP + H(+). It functions in the pathway amino-acid biosynthesis; L-threonine biosynthesis; L-threonine from L-aspartate: step 4/5. Functionally, catalyzes the ATP-dependent phosphorylation of L-homoserine to L-homoserine phosphate. This Thermosynechococcus vestitus (strain NIES-2133 / IAM M-273 / BP-1) protein is Homoserine kinase.